The chain runs to 481 residues: Probable glycine dehydrogenase (decarboxylating) subunit 2 (481 aa).

An N6-(pyridoxal phosphate)lysine modification is found at Lys265.

The protein belongs to the GcvP family. C-terminal subunit subfamily. As to quaternary structure, the glycine cleavage system is composed of four proteins: P, T, L and H. In this organism, the P 'protein' is a heterodimer of two subunits. Requires pyridoxal 5'-phosphate as cofactor.

The enzyme catalyses N(6)-[(R)-lipoyl]-L-lysyl-[glycine-cleavage complex H protein] + glycine + H(+) = N(6)-[(R)-S(8)-aminomethyldihydrolipoyl]-L-lysyl-[glycine-cleavage complex H protein] + CO2. In terms of biological role, the glycine cleavage system catalyzes the degradation of glycine. The P protein binds the alpha-amino group of glycine through its pyridoxal phosphate cofactor; CO(2) is released and the remaining methylamine moiety is then transferred to the lipoamide cofactor of the H protein. In Thermosipho melanesiensis (strain DSM 12029 / CIP 104789 / BI429), this protein is Probable glycine dehydrogenase (decarboxylating) subunit 2.